The following is a 250-amino-acid chain: Prophage antitermination protein Q homolog QuuQ (250 aa).

It belongs to the phage antitermination Q type 2 family.

Functionally, positively regulate expression of some phage genes. Bacterial host RNA polymerase modified by antitermination proteins transcribes through termination sites that otherwise prevent expression of the regulated genes. This Escherichia coli (strain K12) protein is Prophage antitermination protein Q homolog QuuQ (quuQ).